Here is a 399-residue protein sequence, read N- to C-terminus: Dof zinc finger protein DOF5.1 (399 aa).

The Dof-type zinc-finger motif lies at Leu-95 to Arg-149. 4 residues coordinate Zn(2+): Cys-97, Cys-100, Cys-122, and Cys-125. The tract at residues Pro-139–Asp-176 is disordered.

As to expression, expressed ubiquitously, especially in the vascular tissues, except in seeds, petals and anthers. Specific to the vascular tissues in young leaves, cotyledons and flower buds. The PEAR proteins (e.g. DOF2.4, DOF5.1, DOF3.2, DOF1.1, DOF5.6 and DOF5.3) form a short-range concentration gradient that peaks at protophloem sieve elements (PSE).

It is found in the nucleus. In terms of biological role, transcription factor that binds specifically to a 5'-AA[AG]G-3' consensus core sequence. Binds to 5'-TAAAGT-3' motif in REV promoter to triggers its transcription, thus regulating adaxial-abaxial polarity and influencing leaf axial patterning in an auxin transport- and response-dependent manner (e.g. IAA6 and IAA19 genes expression). Probably involved in early processes for vascular development. The PEAR proteins (e.g. DOF2.4, DOF5.1, DOF3.2, DOF1.1, DOF5.6 and DOF5.3) activate gene expression that promotes radial growth of protophloem sieve elements. The protein is Dof zinc finger protein DOF5.1 of Arabidopsis thaliana (Mouse-ear cress).